The primary structure comprises 450 residues: Glutamyl-tRNA(Gln) amidotransferase subunit A, mitochondrial (450 aa).

Residues lysine 47 and serine 122 each act as charge relay system in the active site. The active-site Acyl-ester intermediate is the serine 146.

Belongs to the amidase family. GatA subfamily. Subunit of the heterotrimeric GatFAB amidotransferase (AdT) complex, composed of A, B and F subunits.

It localises to the mitochondrion. It carries out the reaction L-glutamyl-tRNA(Gln) + L-glutamine + ATP + H2O = L-glutaminyl-tRNA(Gln) + L-glutamate + ADP + phosphate + H(+). Its function is as follows. Allows the formation of correctly charged Gln-tRNA(Gln) through the transamidation of misacylated Glu-tRNA(Gln) in the mitochondria. The reaction takes place in the presence of glutamine and ATP through an activated gamma-phospho-Glu-tRNA(Gln). The chain is Glutamyl-tRNA(Gln) amidotransferase subunit A, mitochondrial from Candida albicans (strain WO-1) (Yeast).